The chain runs to 117 residues: Large ribosomal subunit protein bL19 (117 aa).

Belongs to the bacterial ribosomal protein bL19 family.

This protein is located at the 30S-50S ribosomal subunit interface and may play a role in the structure and function of the aminoacyl-tRNA binding site. This Desulfotalea psychrophila (strain LSv54 / DSM 12343) protein is Large ribosomal subunit protein bL19.